A 461-amino-acid polypeptide reads, in one-letter code: Glycine--tRNA ligase (461 aa).

Substrate is bound by residues R100 and E174. ATP-binding positions include 206-208 (RNE), 216-221 (FRTREF), 290-291 (EL), and 334-337 (GVDR). 221–225 (FEQME) is a binding site for substrate. Residue 330–334 (EPSVG) participates in substrate binding.

The protein belongs to the class-II aminoacyl-tRNA synthetase family. Homodimer.

Its subcellular location is the cytoplasm. The catalysed reaction is tRNA(Gly) + glycine + ATP = glycyl-tRNA(Gly) + AMP + diphosphate. Its function is as follows. Catalyzes the attachment of glycine to tRNA(Gly). The polypeptide is Glycine--tRNA ligase (Caldanaerobacter subterraneus subsp. tengcongensis (strain DSM 15242 / JCM 11007 / NBRC 100824 / MB4) (Thermoanaerobacter tengcongensis)).